A 529-amino-acid chain; its full sequence is Phospholipase A1-Igamma2, chloroplastic (529 aa).

Residues 1 to 43 (MAAIPSHNNLLTINHKNSITGSSSLNTNFSEINFPAKFRVATR) constitute a chloroplast transit peptide. Positions 316-320 (GHSLG) match the GXSXG motif. The active-site Acyl-ester intermediate is the Ser-318. Active-site charge relay system residues include Asp-381 and His-437.

This sequence belongs to the AB hydrolase superfamily. Lipase family. As to quaternary structure, interacts with SBP1. Widely expressed. Highly expressed in leaves and stems.

It is found in the plastid. The protein resides in the chloroplast. The catalysed reaction is 1,2-dihexadecanoyl-sn-glycero-3-phosphocholine + H2O = 2-hexadecanoyl-sn-glycero-3-phosphocholine + hexadecanoate + H(+). It catalyses the reaction a 1,2-diacyl-3-O-(beta-D-galactosyl)-sn-glycerol + H2O = an acyl-3-O-(beta-D-galactosyl)-sn-glycerol + a fatty acid + H(+). It carries out the reaction a 1,2-diacyl-3-O-[alpha-D-galactosyl-(1-&gt;6)-beta-D-galactosyl]-sn-glycerol + H2O = acyl-3-O-[alpha-D-galactosyl-(1-&gt;6)-beta-D-galactosyl]-sn-glycerol + a fatty acid + H(+). The enzyme catalyses a triacylglycerol + H2O = a diacylglycerol + a fatty acid + H(+). Functionally, acylhydrolase with broad specificity. Catalyzes the hydrolysis of phosphatidylcholine at the sn-1 position. Possesses moderate activity toward phosphatidylcholine (PC), monogalactosyldiacylglycerol (MGDG), digalactosyldiacylglycerol (DGDG) and triacylglycerol (TAG). The sequence is that of Phospholipase A1-Igamma2, chloroplastic from Arabidopsis thaliana (Mouse-ear cress).